The chain runs to 500 residues: ATP synthase subunit alpha (500 aa).

Residue 167-174 coordinates ATP; it reads GDRQTGKT.

It belongs to the ATPase alpha/beta chains family. F-type ATPases have 2 components, CF(1) - the catalytic core - and CF(0) - the membrane proton channel. CF(1) has five subunits: alpha(3), beta(3), gamma(1), delta(1), epsilon(1). CF(0) has three main subunits: a(1), b(2) and c(9-12). The alpha and beta chains form an alternating ring which encloses part of the gamma chain. CF(1) is attached to CF(0) by a central stalk formed by the gamma and epsilon chains, while a peripheral stalk is formed by the delta and b chains.

The protein resides in the cell inner membrane. The enzyme catalyses ATP + H2O + 4 H(+)(in) = ADP + phosphate + 5 H(+)(out). Its function is as follows. Produces ATP from ADP in the presence of a proton gradient across the membrane. The alpha chain is a regulatory subunit. In Wolinella succinogenes (strain ATCC 29543 / DSM 1740 / CCUG 13145 / JCM 31913 / LMG 7466 / NCTC 11488 / FDC 602W) (Vibrio succinogenes), this protein is ATP synthase subunit alpha.